The chain runs to 130 residues: Small ribosomal subunit protein uS9 (130 aa).

The protein belongs to the universal ribosomal protein uS9 family.

The chain is Small ribosomal subunit protein uS9 from Bacillus mycoides (strain KBAB4) (Bacillus weihenstephanensis).